The primary structure comprises 364 residues: GTPase Obg (364 aa).

In terms of domain architecture, Obg spans 1–159 (MKFVDEAYID…KSLKLELKVL (159 aa)). One can recognise an OBG-type G domain in the interval 160–334 (ADVGLLGMPN…LVKTIYQHVK (175 aa)). Residues 166–173 (GMPNAGKS), 191–195 (FTTLH), 213–216 (DLPG), 284–287 (NKLD), and 315–317 (SAL) each bind GTP. Positions 173 and 193 each coordinate Mg(2+). Positions 337-364 (QKSEQPEEEVDPRFIELPPEPAKPASSD) are disordered.

The protein belongs to the TRAFAC class OBG-HflX-like GTPase superfamily. OBG GTPase family. In terms of assembly, monomer. It depends on Mg(2+) as a cofactor.

It is found in the cytoplasm. Its function is as follows. An essential GTPase which binds GTP, GDP and possibly (p)ppGpp with moderate affinity, with high nucleotide exchange rates and a fairly low GTP hydrolysis rate. Plays a role in control of the cell cycle, stress response, ribosome biogenesis and in those bacteria that undergo differentiation, in morphogenesis control. The sequence is that of GTPase Obg from Polaromonas naphthalenivorans (strain CJ2).